The sequence spans 981 residues: Ubiquitin carboxyl-terminal hydrolase 37 (981 aa).

Positions Lys32–Asn34 match the KEN box 1 motif. Short sequence motifs (D-box) lie at residues Arg71–Asn79 and Arg96–Asn105. Residues Met111–Pro308 are disordered. The residue at position 114 (Ser114) is a Phosphoserine. A compositionally biased stretch (polar residues) spans Arg135–Arg148. A compositionally biased stretch (basic and acidic residues) spans Gly149–Phe159. Residues Arg160–Arg168 carry the D-box 3 motif. Ser170 carries the phosphoserine modification. Residues Lys172 to Leu195 are compositionally biased toward polar residues. Phosphoserine is present on Ser212. Positions Lys223–Asn225 match the KEN box 2 motif. Over residues Ser245–Arg259 the composition is skewed to basic and acidic residues. A compositionally biased stretch (polar residues) spans Leu266–Ala300. Residues Gln343–Lys953 form the USP domain. The active-site Nucleophile is the Cys352. Ser630 is subject to Phosphoserine; by CDK2. Ser652 and Ser654 each carry phosphoserine. Disordered stretches follow at residues Gly673–Gly704 and Lys719–Glu831. Composition is skewed to basic and acidic residues over residues Lys683 to Leu697 and Lys719 to Pro734. The 20-residue stretch at Ser706–Thr725 folds into the UIM 1 domain. Ser772 bears the Phosphoserine mark. Residues Ile776–Thr788 are compositionally biased toward basic and acidic residues. The short motif at Lys784–Asn786 is the KEN box 3 element. 2 UIM domains span residues Arg808–Trp827 and Lys830–Ser849. Residues Leu813–Gln824 are compositionally biased toward low complexity. His908 acts as the Proton acceptor in catalysis.

This sequence belongs to the peptidase C19 family. In terms of assembly, interacts with FZR1/CDH1. Interacts with CDT1. Polyubiquitinated via 'Lys-11'-linked ubiquitin by the APC(CDH1) complex during late mitosis, leading to its degradation. Able to mediate auto-deubiquitination. Post-translationally, phosphorylated at Ser-630 by CDK2 during G1/S phase but not during mitosis; phosphorylation at Ser-630 is required for deubiquitinase activity. Also polyubiquitinated during early G1 phase, without leading to degradation. Phosphorylated at Ser-114 by ATM following DNA damage, which in turn increases its deubiquitination activity towards BLM.

The protein resides in the nucleus. The protein localises to the chromosome. The enzyme catalyses Thiol-dependent hydrolysis of ester, thioester, amide, peptide and isopeptide bonds formed by the C-terminal Gly of ubiquitin (a 76-residue protein attached to proteins as an intracellular targeting signal).. Deubiquitinase that plays a role in different processes including cell cycle regulation, DNA replication or DNA damage response. Antagonizes the anaphase-promoting complex (APC/C) during G1/S transition by mediating deubiquitination of cyclin-A (CCNA1 and CCNA2), thereby promoting S phase entry. Specifically mediates deubiquitination of 'Lys-11'-linked polyubiquitin chains, a specific ubiquitin-linkage type mediated by the APC/C complex. Phosphorylation at Ser-628 during G1/S phase maximizes the deubiquitinase activity, leading to prevent degradation of cyclin-A (CCNA1 and CCNA2). Plays an important role in the regulation of DNA replication by stabilizing the licensing factor CDT1. Also plays an essential role beyond S-phase entry to promote the efficiency and fidelity of replication by deubiquitinating checkpoint kinase 1/CHK1, promoting its stability. Sustains the DNA damage response (DDR) by deubiquitinating and stabilizing the ATP-dependent DNA helicase BLM. Mechanistically, DNA double-strand breaks (DSB) promotes ATM-mediated phosphorylation of USP37 and enhances the binding between USP37 and BLM. Promotes cell migration by deubiquitinating and stabilizing the epithelial-mesenchymal transition (EMT)-inducing transcription factor SNAI. Plays a role in the regulation of mitotic spindle assembly and mitotic progression by associating with chromatin-associated WAPL and stabilizing it through deubiquitination. The chain is Ubiquitin carboxyl-terminal hydrolase 37 (USP37) from Canis lupus familiaris (Dog).